A 67-amino-acid polypeptide reads, in one-letter code: Large ribosomal subunit protein bL35 (67 aa).

Belongs to the bacterial ribosomal protein bL35 family.

This is Large ribosomal subunit protein bL35 from Zymomonas mobilis subsp. mobilis (strain ATCC 31821 / ZM4 / CP4).